The primary structure comprises 89 residues: Small ribosomal subunit protein uS15 (89 aa).

Belongs to the universal ribosomal protein uS15 family. Part of the 30S ribosomal subunit. Forms a bridge to the 50S subunit in the 70S ribosome, contacting the 23S rRNA.

Functionally, one of the primary rRNA binding proteins, it binds directly to 16S rRNA where it helps nucleate assembly of the platform of the 30S subunit by binding and bridging several RNA helices of the 16S rRNA. Forms an intersubunit bridge (bridge B4) with the 23S rRNA of the 50S subunit in the ribosome. The protein is Small ribosomal subunit protein uS15 of Lactobacillus helveticus (strain DPC 4571).